The sequence spans 566 residues: Endoglucanase B (566 aa).

An N-terminal signal peptide occupies residues 1 to 30; sequence MKKRRSSKVILSLAIVVALLAAVEPNAALA. E177 functions as the Proton donor in the catalytic mechanism. The active-site Nucleophile is E299.

This sequence belongs to the glycosyl hydrolase 5 (cellulase A) family.

The enzyme catalyses Endohydrolysis of (1-&gt;4)-beta-D-glucosidic linkages in cellulose, lichenin and cereal beta-D-glucans.. The protein is Endoglucanase B (celB) of Paenibacillus lautus (Bacillus lautus).